Here is a 316-residue protein sequence, read N- to C-terminus: Transaldolase (316 aa).

The Schiff-base intermediate with substrate role is filled by Lys-132.

It belongs to the transaldolase family. Type 1 subfamily. Homodimer.

Its subcellular location is the cytoplasm. It catalyses the reaction D-sedoheptulose 7-phosphate + D-glyceraldehyde 3-phosphate = D-erythrose 4-phosphate + beta-D-fructose 6-phosphate. The protein operates within carbohydrate degradation; pentose phosphate pathway; D-glyceraldehyde 3-phosphate and beta-D-fructose 6-phosphate from D-ribose 5-phosphate and D-xylulose 5-phosphate (non-oxidative stage): step 2/3. In terms of biological role, transaldolase is important for the balance of metabolites in the pentose-phosphate pathway. This chain is Transaldolase, found in Vibrio parahaemolyticus serotype O3:K6 (strain RIMD 2210633).